A 486-amino-acid polypeptide reads, in one-letter code: N-succinylglutamate 5-semialdehyde dehydrogenase (486 aa).

220-225 (GSSRTG) serves as a coordination point for NAD(+). Active-site residues include E243 and C277.

Belongs to the aldehyde dehydrogenase family. AstD subfamily.

It carries out the reaction N-succinyl-L-glutamate 5-semialdehyde + NAD(+) + H2O = N-succinyl-L-glutamate + NADH + 2 H(+). The protein operates within amino-acid degradation; L-arginine degradation via AST pathway; L-glutamate and succinate from L-arginine: step 4/5. Its function is as follows. Catalyzes the NAD-dependent reduction of succinylglutamate semialdehyde into succinylglutamate. This chain is N-succinylglutamate 5-semialdehyde dehydrogenase, found in Shewanella frigidimarina (strain NCIMB 400).